The chain runs to 274 residues: Rhamnulose-1-phosphate aldolase (274 aa).

E117 is an active-site residue. 3 residues coordinate Zn(2+): H141, H143, and H212.

It belongs to the aldolase class II family. RhaD subfamily. As to quaternary structure, homotetramer. Zn(2+) serves as cofactor.

The protein localises to the cytoplasm. The enzyme catalyses L-rhamnulose 1-phosphate = (S)-lactaldehyde + dihydroxyacetone phosphate. It participates in carbohydrate degradation; L-rhamnose degradation; glycerone phosphate from L-rhamnose: step 3/3. In terms of biological role, catalyzes the reversible cleavage of L-rhamnulose-1-phosphate to dihydroxyacetone phosphate (DHAP) and L-lactaldehyde. The polypeptide is Rhamnulose-1-phosphate aldolase (Shigella sonnei (strain Ss046)).